A 365-amino-acid polypeptide reads, in one-letter code: Peptide chain release factor 2 (365 aa).

Q252 carries the N5-methylglutamine modification.

This sequence belongs to the prokaryotic/mitochondrial release factor family. Post-translationally, methylated by PrmC. Methylation increases the termination efficiency of RF2.

Its subcellular location is the cytoplasm. Functionally, peptide chain release factor 2 directs the termination of translation in response to the peptide chain termination codons UGA and UAA. The protein is Peptide chain release factor 2 of Aeromonas salmonicida (strain A449).